Here is a 406-residue protein sequence, read N- to C-terminus: Fructose-1,6-bisphosphatase, chloroplastic (406 aa).

Residues 1–47 constitute a chloroplast transit peptide; that stretch reads MAAAATTSSHLLLLSRQQAAASLQCGLSFRRQPGRLAGGSSAPSVRC. Residues Glu128, Glu157, Asp178, Leu180, and Asp181 each coordinate Mg(2+). 181-184 contacts substrate; that stretch reads DGSS. Residues Cys222 and Cys227 are joined by a disulfide bond. 5 residues coordinate substrate: Asn286, Tyr318, Tyr336, Tyr338, and Lys348. Glu354 lines the Mg(2+) pocket.

Belongs to the FBPase class 1 family. As to quaternary structure, homotetramer. Mg(2+) serves as cofactor.

The protein localises to the plastid. The protein resides in the chloroplast stroma. The enzyme catalyses beta-D-fructose 1,6-bisphosphate + H2O = beta-D-fructose 6-phosphate + phosphate. Its pathway is carbohydrate biosynthesis; Calvin cycle. With respect to regulation, inhibited by sodium chloride. Functionally, catalyzes the irreversible reaction from fructose-1,6-bisphosphate to fructose-6-phosphate and inorganic phosphate, to regenerate the primary CO(2) acceptor molecule, ribulose-1,5-bisphosphate. Involved in the regulation of photosynthetic performance and sucrose synthesis. The protein is Fructose-1,6-bisphosphatase, chloroplastic of Oryza sativa subsp. indica (Rice).